Here is a 143-residue protein sequence, read N- to C-terminus: Probable cyclic pyranopterin monophosphate synthase (143 aa).

Residues 61–63 (MCH) and 97–98 (ME) each bind substrate. Asp112 is a catalytic residue.

The protein belongs to the MoaC family. Homohexamer; trimer of dimers.

The enzyme catalyses (8S)-3',8-cyclo-7,8-dihydroguanosine 5'-triphosphate = cyclic pyranopterin phosphate + diphosphate. The protein operates within cofactor biosynthesis; molybdopterin biosynthesis. In terms of biological role, catalyzes the conversion of (8S)-3',8-cyclo-7,8-dihydroguanosine 5'-triphosphate to cyclic pyranopterin monophosphate (cPMP). This Sulfolobus acidocaldarius (strain ATCC 33909 / DSM 639 / JCM 8929 / NBRC 15157 / NCIMB 11770) protein is Probable cyclic pyranopterin monophosphate synthase.